Consider the following 139-residue polypeptide: MGSKIPLPQYETKGSAGLDLRACLDSNLSLQAGTSQLIPIGFAMYLEDPGLAAMVIPRSGLGSKHGIVLGNLVGLIDSDYQGELMVPAWNRSDTDFEINPGDRIAQMIIVPVIQADFEIVDEFNETQRGEKGFGSSGIN.

Residues 58-60 (RSG), Asn71, 75-77 (LID), and Met85 contribute to the substrate site.

It belongs to the dUTPase family. The cofactor is Mg(2+).

The enzyme catalyses dUTP + H2O = dUMP + diphosphate + H(+). It participates in pyrimidine metabolism; dUMP biosynthesis; dUMP from dCTP (dUTP route): step 2/2. In terms of biological role, this enzyme is involved in nucleotide metabolism: it produces dUMP, the immediate precursor of thymidine nucleotides and it decreases the intracellular concentration of dUTP so that uracil cannot be incorporated into DNA. The polypeptide is Deoxyuridine 5'-triphosphate nucleotidohydrolase (Gamma-proteobacterium EBAC31A08).